The chain runs to 189 residues: Protein GrpE (189 aa).

The disordered stretch occupies residues 1 to 21 (MADEQNLDNQNPETPEQSQAD). Over residues 7 to 20 (LDNQNPETPEQSQA) the composition is skewed to polar residues.

The protein belongs to the GrpE family. As to quaternary structure, homodimer.

The protein localises to the cytoplasm. Participates actively in the response to hyperosmotic and heat shock by preventing the aggregation of stress-denatured proteins, in association with DnaK and GrpE. It is the nucleotide exchange factor for DnaK and may function as a thermosensor. Unfolded proteins bind initially to DnaJ; upon interaction with the DnaJ-bound protein, DnaK hydrolyzes its bound ATP, resulting in the formation of a stable complex. GrpE releases ADP from DnaK; ATP binding to DnaK triggers the release of the substrate protein, thus completing the reaction cycle. Several rounds of ATP-dependent interactions between DnaJ, DnaK and GrpE are required for fully efficient folding. The protein is Protein GrpE of Stutzerimonas stutzeri (strain A1501) (Pseudomonas stutzeri).